We begin with the raw amino-acid sequence, 670 residues long: UvrABC system protein B (670 aa).

The Helicase ATP-binding domain maps to 51–433 (DGLKKGEPFQ…SSRVVEQIIR (383 aa)). 64 to 71 (GVTGSGKT) lines the ATP pocket. A Beta-hairpin motif is present at residues 117–140 (YYDYYQPESYLPAKDQYIEKDAMI). Residues 453 to 612 (DVMQEIRKIV…IVPTTIRKPI (160 aa)) enclose the Helicase C-terminal domain. Residues 631-666 (PNVIIELDAEMREAADRLDFERAIQVRELIKKLEKE) form the UVR domain.

This sequence belongs to the UvrB family. In terms of assembly, forms a heterotetramer with UvrA during the search for lesions. Interacts with UvrC in an incision complex.

The protein resides in the cytoplasm. In terms of biological role, the UvrABC repair system catalyzes the recognition and processing of DNA lesions. A damage recognition complex composed of 2 UvrA and 2 UvrB subunits scans DNA for abnormalities. Upon binding of the UvrA(2)B(2) complex to a putative damaged site, the DNA wraps around one UvrB monomer. DNA wrap is dependent on ATP binding by UvrB and probably causes local melting of the DNA helix, facilitating insertion of UvrB beta-hairpin between the DNA strands. Then UvrB probes one DNA strand for the presence of a lesion. If a lesion is found the UvrA subunits dissociate and the UvrB-DNA preincision complex is formed. This complex is subsequently bound by UvrC and the second UvrB is released. If no lesion is found, the DNA wraps around the other UvrB subunit that will check the other stand for damage. The chain is UvrABC system protein B from Methanosarcina mazei (strain ATCC BAA-159 / DSM 3647 / Goe1 / Go1 / JCM 11833 / OCM 88) (Methanosarcina frisia).